Consider the following 339-residue polypeptide: Lipoyl synthase (339 aa).

Positions 13–35 are disordered; that stretch reads RPKLDAPARPRHPEKAHRPDTAI. [4Fe-4S] cluster is bound by residues Cys68, Cys73, Cys79, Cys94, Cys98, Cys101, and Ser307. The Radical SAM core domain occupies 80 to 296; it reads WEKRHATFMI…ETTAYAKGFL (217 aa).

Belongs to the radical SAM superfamily. Lipoyl synthase family. It depends on [4Fe-4S] cluster as a cofactor.

It is found in the cytoplasm. It carries out the reaction [[Fe-S] cluster scaffold protein carrying a second [4Fe-4S](2+) cluster] + N(6)-octanoyl-L-lysyl-[protein] + 2 oxidized [2Fe-2S]-[ferredoxin] + 2 S-adenosyl-L-methionine + 4 H(+) = [[Fe-S] cluster scaffold protein] + N(6)-[(R)-dihydrolipoyl]-L-lysyl-[protein] + 4 Fe(3+) + 2 hydrogen sulfide + 2 5'-deoxyadenosine + 2 L-methionine + 2 reduced [2Fe-2S]-[ferredoxin]. It functions in the pathway protein modification; protein lipoylation via endogenous pathway; protein N(6)-(lipoyl)lysine from octanoyl-[acyl-carrier-protein]: step 2/2. Functionally, catalyzes the radical-mediated insertion of two sulfur atoms into the C-6 and C-8 positions of the octanoyl moiety bound to the lipoyl domains of lipoate-dependent enzymes, thereby converting the octanoylated domains into lipoylated derivatives. The protein is Lipoyl synthase of Methylorubrum extorquens (strain CM4 / NCIMB 13688) (Methylobacterium extorquens).